The primary structure comprises 186 residues: Ribosome-recycling factor (186 aa).

It belongs to the RRF family.

Its subcellular location is the cytoplasm. Its function is as follows. Responsible for the release of ribosomes from messenger RNA at the termination of protein biosynthesis. May increase the efficiency of translation by recycling ribosomes from one round of translation to another. The protein is Ribosome-recycling factor of Phocaeicola vulgatus (strain ATCC 8482 / DSM 1447 / JCM 5826 / CCUG 4940 / NBRC 14291 / NCTC 11154) (Bacteroides vulgatus).